Consider the following 407-residue polypeptide: Phosphopentomutase (407 aa).

Residues Asp10, Asp306, His311, Asp347, His348, and His359 each contribute to the Mn(2+) site.

Belongs to the phosphopentomutase family. It depends on Mn(2+) as a cofactor.

It is found in the cytoplasm. The catalysed reaction is 2-deoxy-alpha-D-ribose 1-phosphate = 2-deoxy-D-ribose 5-phosphate. It carries out the reaction alpha-D-ribose 1-phosphate = D-ribose 5-phosphate. It functions in the pathway carbohydrate degradation; 2-deoxy-D-ribose 1-phosphate degradation; D-glyceraldehyde 3-phosphate and acetaldehyde from 2-deoxy-alpha-D-ribose 1-phosphate: step 1/2. Functionally, isomerase that catalyzes the conversion of deoxy-ribose 1-phosphate (dRib-1-P) and ribose 1-phosphate (Rib-1-P) to deoxy-ribose 5-phosphate (dRib-5-P) and ribose 5-phosphate (Rib-5-P), respectively. The polypeptide is Phosphopentomutase (Yersinia pestis bv. Antiqua (strain Antiqua)).